Here is a 277-residue protein sequence, read N- to C-terminus: MQNNEQTEYKTVRGLTRGLMLLNMLNKLDGGASVGLLAELSGLHRTTVRRLLETLQEEGYVRRSPSDDSFRLTIKVRQLSEGFRDEQWISALAAPLLGDLLREVVWPTDVSTLDVDAMVVRETTHRFSRLSFHRAMVGRRLPLLKTASGLTWLAFCPEQDRKELIEMLASRPGDDYQLAREPLKLEAILARARKEGYGQNYRGWDQEEKIASIAVPLRSEQRVIGCLNLVYMASAMTIEQAAEKHLPALQRVAKQIEEGVESQAILVAGRRSGMHLR.

The HTH iclR-type domain occupies 12 to 74; that stretch reads VRGLTRGLML…PSDDSFRLTI (63 aa). A DNA-binding region (H-T-H motif) is located at residues 34 to 53; the sequence is VGLLAELSGLHRTTVRRLLE. One can recognise an IclR-ED domain in the interval 89–262; that stretch reads ISALAAPLLG…AKQIEEGVES (174 aa).

Functionally, activator of the mhpABCDFE operon coding for components of the 3-hydroxyphenylpropionate degradation pathway. The sequence is that of DNA-binding transcriptional activator MhpR (mhpR) from Escherichia coli (strain K12).